A 305-amino-acid chain; its full sequence is Protoheme IX farnesyltransferase (305 aa).

A run of 9 helical transmembrane segments spans residues 29–49 (LIVF…PGLA), 55–75 (LWAT…NCLI), 101–121 (ALIF…EAVN), 123–143 (LTAW…TVVL), 151–171 (IVIG…AMTG), 177–197 (GLIL…ALAL), 219–241 (FTRL…PFVQ), 246–268 (WLYL…RLWR), and 283–303 (IWHL…QDLL).

This sequence belongs to the UbiA prenyltransferase family. Protoheme IX farnesyltransferase subfamily.

The protein resides in the cell inner membrane. The catalysed reaction is heme b + (2E,6E)-farnesyl diphosphate + H2O = Fe(II)-heme o + diphosphate. It functions in the pathway porphyrin-containing compound metabolism; heme O biosynthesis; heme O from protoheme: step 1/1. Converts heme B (protoheme IX) to heme O by substitution of the vinyl group on carbon 2 of heme B porphyrin ring with a hydroxyethyl farnesyl side group. In Leptothrix cholodnii (strain ATCC 51168 / LMG 8142 / SP-6) (Leptothrix discophora (strain SP-6)), this protein is Protoheme IX farnesyltransferase.